A 537-amino-acid chain; its full sequence is Tyrosine-protein kinase Fyn (537 aa).

Residue G2 is the site of N-myristoyl glycine attachment. Residues C3 and C6 are each lipidated (S-palmitoyl cysteine). T12 carries the post-translational modification Phosphothreonine; by PKC. Residues L14–T35 form a disordered region. 2 positions are modified to phosphoserine: S21 and S26. The SH3 domain occupies T82–S143. One can recognise an SH2 domain in the interval W149 to C246. Position 185 is a phosphotyrosine (Y185). The region spanning L271–F524 is the Protein kinase domain. Residues L277–V285 and K299 contribute to the ATP site. Residue D390 is the Proton acceptor of the active site. A Phosphotyrosine; by autocatalysis modification is found at Y420. Y531 is modified (phosphotyrosine; by CSK).

This sequence belongs to the protein kinase superfamily. Tyr protein kinase family. SRC subfamily. In terms of assembly, interacts (via its SH3 domain) with PIK3R1 and PRMT8. Interacts with FYB1, PAG1, and SH2D1A. Interacts with CD79A (tyrosine-phosphorylated form); the interaction increases FYN activity. Interacts (via SH2 domain) with CSF1R (tyrosine phosphorylated). Interacts with TOM1L1 (phosphorylated form). Interacts with KDR (tyrosine phosphorylated). Interacts (via SH3 domain) with KLHL2 (via N-terminus). Interacts with SH2D1A and SLAMF1. Interacts with ITCH; the interaction phosphorylates ITCH and negatively regulates its activity. Interacts with FASLG. Interacts with RUNX3. Interacts with KIT. Interacts with EPHA8; possible downstream effector of EPHA8 in regulation of cell adhesion. Interacts with PTK2/FAK1; this interaction leads to PTK2/FAK1 phosphorylation and activation. Interacts with CAV1; this interaction couples integrins to the Ras-ERK pathway. Interacts with UNC119. Interacts (via SH2 domain) with PTPRH (phosphorylated form). Interacts with PTPRO (phosphorylated form). Interacts with PTPRB (phosphorylated form). Interacts with FYB2. Interacts with DSCAM. Interacts with SKAP1 and FYB1; this interaction promotes the phosphorylation of CLNK. Interacts with NEDD9; in the presence of PTK2. As to quaternary structure, (Microbial infection) Interacts (via its SH3 domain) with hepatitis E virus/HEV protein ORF3. The cofactor is Mn(2+). Autophosphorylated at Tyr-420. Phosphorylation on the C-terminal tail at Tyr-531 by CSK maintains the enzyme in an inactive state. PTPRC/CD45 dephosphorylates Tyr-531 leading to activation. Ultraviolet B (UVB) strongly increase phosphorylation at Thr-12 and kinase activity, and promotes translocation from the cytoplasm to the nucleus. Dephosphorylation at Tyr-420 by PTPN2 negatively regulates T-cell receptor signaling. Phosphorylated at tyrosine residues, which can be enhanced by NTN1. In terms of processing, palmitoylated. Palmitoylation at Cys-3 and Cys-6, probably by ZDHHC21, regulates subcellular location. As to expression, isoform 1 is highly expressed in the brain. Isoform 2 is expressed in cells of hemopoietic lineages, especially T-lymphocytes.

Its subcellular location is the cytoplasm. It localises to the nucleus. The protein localises to the cell membrane. The protein resides in the perikaryon. The catalysed reaction is L-tyrosyl-[protein] + ATP = O-phospho-L-tyrosyl-[protein] + ADP + H(+). Inhibited by phosphorylation of Tyr-531 by leukocyte common antigen and activated by dephosphorylation of this site. Its function is as follows. Non-receptor tyrosine-protein kinase that plays a role in many biological processes including regulation of cell growth and survival, cell adhesion, integrin-mediated signaling, cytoskeletal remodeling, cell motility, immune response and axon guidance. Inactive FYN is phosphorylated on its C-terminal tail within the catalytic domain. Following activation by PKA, the protein subsequently associates with PTK2/FAK1, allowing PTK2/FAK1 phosphorylation, activation and targeting to focal adhesions. Involved in the regulation of cell adhesion and motility through phosphorylation of CTNNB1 (beta-catenin) and CTNND1 (delta-catenin). Regulates cytoskeletal remodeling by phosphorylating several proteins including the actin regulator WAS and the microtubule-associated proteins MAP2 and MAPT. Promotes cell survival by phosphorylating AGAP2/PIKE-A and preventing its apoptotic cleavage. Participates in signal transduction pathways that regulate the integrity of the glomerular slit diaphragm (an essential part of the glomerular filter of the kidney) by phosphorylating several slit diaphragm components including NPHS1, KIRREL1 and TRPC6. Plays a role in neural processes by phosphorylating DPYSL2, a multifunctional adapter protein within the central nervous system, ARHGAP32, a regulator for Rho family GTPases implicated in various neural functions, and SNCA, a small pre-synaptic protein. Involved in reelin signaling by mediating phosphorylation of DAB1 following reelin (RELN)-binding to its receptor. Participates in the downstream signaling pathways that lead to T-cell differentiation and proliferation following T-cell receptor (TCR) stimulation. Phosphorylates PTK2B/PYK2 in response to T-cell receptor activation. Also participates in negative feedback regulation of TCR signaling through phosphorylation of PAG1, thereby promoting interaction between PAG1 and CSK and recruitment of CSK to lipid rafts. CSK maintains LCK and FYN in an inactive form. Promotes CD28-induced phosphorylation of VAV1. In mast cells, phosphorylates CLNK after activation of immunoglobulin epsilon receptor signaling. Can also promote CD244-mediated NK cell activation. The sequence is that of Tyrosine-protein kinase Fyn (FYN) from Homo sapiens (Human).